We begin with the raw amino-acid sequence, 517 residues long: Crotonobetaine/carnitine--CoA ligase (517 aa).

Belongs to the ATP-dependent AMP-binding enzyme family.

The catalysed reaction is 4-(trimethylamino)butanoate + ATP + CoA = 4-(trimethylamino)butanoyl-CoA + AMP + diphosphate. The enzyme catalyses crotonobetaine + ATP + CoA = crotonobetainyl-CoA + AMP + diphosphate. It catalyses the reaction (R)-carnitine + ATP + CoA = (R)-carnitinyl-CoA + AMP + diphosphate. Its pathway is amine and polyamine metabolism; carnitine metabolism. In terms of biological role, catalyzes the transfer of CoA to carnitine, generating the initial carnitinyl-CoA needed for the CaiB reaction cycle. Also has activity toward crotonobetaine and gamma-butyrobetaine. The sequence is that of Crotonobetaine/carnitine--CoA ligase from Escherichia coli (strain SE11).